A 477-amino-acid chain; its full sequence is ETS translocation variant 1 (477 aa).

Serine 94 is modified (phosphoserine). Residues 128–179 form a disordered region; that stretch reads PQVGMRPSNPPTPSSTPVSPLHHASPNTAHTPKPDRAFPAHLPPSQSIPDST. Residues serine 191 and serine 216 each carry the phosphoserine; by RPS6KA1 and RPS6KA5 modification. Lysine 317 is covalently cross-linked (Glycyl lysine isopeptide (Lys-Gly) (interchain with G-Cter in SUMO2)). The ETS DNA-binding region spans 335-415; sequence LQLWQFLVAL…AGERYVYKFV (81 aa).

This sequence belongs to the ETS family. Sumoylated. In terms of processing, phosphorylated at Ser-191 and Ser-216 by RPS6KA1 and RPS6KA5; phosphorylation activates transcriptional activity. Abundant in kidney. Moderate levels seen in the heart, brain, lung, embryo and lower levels seen in spleen, intestine, testis and thymus.

The protein resides in the nucleus. Transcriptional activator that binds to DNA sequences containing the consensus pentanucleotide 5'-CGGA[AT]-3'. Required for olfactory dopaminergic neuron differentiation; may directly activate expression of tyrosine hydroxylase (TH). This is ETS translocation variant 1 from Mus musculus (Mouse).